Consider the following 151-residue polypeptide: MHALQAKILDPRLGSEFPLPAYATPGSAGLDLRALLKEDTILEPGQTVLIPTGLSIYIGDPGLAAVILPRSGLGHKHGIVLGNLVGLIDSDYQGELMVSCWNRGNTPFTIAVGERIAQLVLVPVVQAHFEIVEAFDESQRGAGGFGHSGSH.

Substrate-binding positions include 70 to 72, asparagine 83, 87 to 89, and methionine 97; these read RSG and LID.

This sequence belongs to the dUTPase family. Mg(2+) serves as cofactor.

The enzyme catalyses dUTP + H2O = dUMP + diphosphate + H(+). The protein operates within pyrimidine metabolism; dUMP biosynthesis; dUMP from dCTP (dUTP route): step 2/2. This enzyme is involved in nucleotide metabolism: it produces dUMP, the immediate precursor of thymidine nucleotides and it decreases the intracellular concentration of dUTP so that uracil cannot be incorporated into DNA. The chain is Deoxyuridine 5'-triphosphate nucleotidohydrolase from Pseudomonas putida (strain ATCC 47054 / DSM 6125 / CFBP 8728 / NCIMB 11950 / KT2440).